A 417-amino-acid chain; its full sequence is Glutamyl-tRNA reductase (417 aa).

Substrate-binding positions include 49-52 (TCNR), serine 105, 110-112 (ETQ), and glutamine 116. The Nucleophile role is filled by cysteine 50. 185–190 (GAGEMI) provides a ligand contact to NADP(+).

This sequence belongs to the glutamyl-tRNA reductase family. In terms of assembly, homodimer.

The enzyme catalyses (S)-4-amino-5-oxopentanoate + tRNA(Glu) + NADP(+) = L-glutamyl-tRNA(Glu) + NADPH + H(+). It functions in the pathway porphyrin-containing compound metabolism; protoporphyrin-IX biosynthesis; 5-aminolevulinate from L-glutamyl-tRNA(Glu): step 1/2. Catalyzes the NADPH-dependent reduction of glutamyl-tRNA(Glu) to glutamate 1-semialdehyde (GSA). In Chromobacterium violaceum (strain ATCC 12472 / DSM 30191 / JCM 1249 / CCUG 213 / NBRC 12614 / NCIMB 9131 / NCTC 9757 / MK), this protein is Glutamyl-tRNA reductase.